The chain runs to 619 residues: Chaperone protein HscA homolog (619 aa).

This sequence belongs to the heat shock protein 70 family.

Its function is as follows. Chaperone involved in the maturation of iron-sulfur cluster-containing proteins. Has a low intrinsic ATPase activity which is markedly stimulated by HscB. In Shewanella amazonensis (strain ATCC BAA-1098 / SB2B), this protein is Chaperone protein HscA homolog.